Reading from the N-terminus, the 352-residue chain is uncharacterized protein (352 aa).

A coiled-coil region spans residues phenylalanine 285–arginine 352.

This is an uncharacterized protein from Emericella nidulans (strain FGSC A4 / ATCC 38163 / CBS 112.46 / NRRL 194 / M139) (Aspergillus nidulans).